Consider the following 117-residue polypeptide: Immunoglobulin kappa variable 1-17 (117 aa).

A signal peptide spans 1-22; the sequence is MDMRVPAQLLGLLLLWFPGARC. The tract at residues 23–45 is framework-1; sequence DIQMTQSPSSLSASVGDRVTITC. Positions 24-117 constitute an Ig-like domain; it reads IQMTQSPSSL…YYCLQHNSYP (94 aa). Cys-45 and Cys-110 form a disulfide bridge. The interval 46–56 is complementarity-determining-1; it reads RASQGIRNDLG. The segment at 57 to 71 is framework-2; it reads WYQQKPGKAPKRLIY. The complementarity-determining-2 stretch occupies residues 72 to 78; it reads AASSLQS. Positions 79–110 are framework-3; sequence GVPSRFSGSGSGTEFTLTISSLQPEDFATYYC. A complementarity-determining-3 region spans residues 111–117; it reads LQHNSYP.

In terms of assembly, immunoglobulins are composed of two identical heavy chains and two identical light chains; disulfide-linked.

The protein resides in the secreted. It localises to the cell membrane. In terms of biological role, v region of the variable domain of immunoglobulin light chains that participates in the antigen recognition. Immunoglobulins, also known as antibodies, are membrane-bound or secreted glycoproteins produced by B lymphocytes. In the recognition phase of humoral immunity, the membrane-bound immunoglobulins serve as receptors which, upon binding of a specific antigen, trigger the clonal expansion and differentiation of B lymphocytes into immunoglobulins-secreting plasma cells. Secreted immunoglobulins mediate the effector phase of humoral immunity, which results in the elimination of bound antigens. The antigen binding site is formed by the variable domain of one heavy chain, together with that of its associated light chain. Thus, each immunoglobulin has two antigen binding sites with remarkable affinity for a particular antigen. The variable domains are assembled by a process called V-(D)-J rearrangement and can then be subjected to somatic hypermutations which, after exposure to antigen and selection, allow affinity maturation for a particular antigen. This Homo sapiens (Human) protein is Immunoglobulin kappa variable 1-17.